The primary structure comprises 243 residues: Pyridoxine 5'-phosphate synthase (243 aa).

A 3-amino-2-oxopropyl phosphate-binding site is contributed by Asn-9. 11–12 (DH) contributes to the 1-deoxy-D-xylulose 5-phosphate binding site. Arg-20 provides a ligand contact to 3-amino-2-oxopropyl phosphate. His-45 serves as the catalytic Proton acceptor. Residues Arg-47 and His-52 each coordinate 1-deoxy-D-xylulose 5-phosphate. Glu-72 serves as the catalytic Proton acceptor. Thr-102 provides a ligand contact to 1-deoxy-D-xylulose 5-phosphate. His-193 acts as the Proton donor in catalysis. Residues Gly-194 and 215-216 (GH) each bind 3-amino-2-oxopropyl phosphate.

This sequence belongs to the PNP synthase family. Homooctamer; tetramer of dimers.

The protein resides in the cytoplasm. The enzyme catalyses 3-amino-2-oxopropyl phosphate + 1-deoxy-D-xylulose 5-phosphate = pyridoxine 5'-phosphate + phosphate + 2 H2O + H(+). Its pathway is cofactor biosynthesis; pyridoxine 5'-phosphate biosynthesis; pyridoxine 5'-phosphate from D-erythrose 4-phosphate: step 5/5. Its function is as follows. Catalyzes the complicated ring closure reaction between the two acyclic compounds 1-deoxy-D-xylulose-5-phosphate (DXP) and 3-amino-2-oxopropyl phosphate (1-amino-acetone-3-phosphate or AAP) to form pyridoxine 5'-phosphate (PNP) and inorganic phosphate. The sequence is that of Pyridoxine 5'-phosphate synthase from Salmonella typhi.